We begin with the raw amino-acid sequence, 605 residues long: Alpha-fetoprotein (605 aa).

The first 18 residues, 1–18 (MKWITPASLILLLHFAAS), serve as a signal peptide directing secretion. Albumin domains follow at residues 19 to 207 (KALH…SIAK), 208 to 398 (ELRE…EELQ), and 399 to 597 (KHIE…KLIS). Intrachain disulfides connect C95-C110, C109-C120, C144-C189, C188-C197, C220-C266, C265-C273, C285-C299, and C298-C309. Residues S107, S111, and S113 each carry the phosphoserine modification. An N-linked (GlcNAc...) asparagine glycan is attached at N247. S340 carries the post-translational modification Phosphoserine. Intrachain disulfides connect C380–C389, C412–C458, C457–C468, C481–C497, C496–C507, C534–C579, and C578–C587. S440 carries the phosphoserine modification. A glycan (N-linked (GlcNAc...) asparagine) is linked at N498.

It belongs to the ALB/AFP/VDB family. In terms of processing, glycosylated; contains two glycans. Post-translationally, sulfated. In terms of tissue distribution, plasma.

It is found in the secreted. Functionally, binds estrogens, fatty acids and metals. The chain is Alpha-fetoprotein (Afp) from Mus musculus (Mouse).